Here is a 210-residue protein sequence, read N- to C-terminus: Large ribosomal subunit protein bL25 (210 aa).

This sequence belongs to the bacterial ribosomal protein bL25 family. CTC subfamily. Part of the 50S ribosomal subunit; part of the 5S rRNA/L5/L18/L25 subcomplex. Contacts the 5S rRNA. Binds to the 5S rRNA independently of L5 and L18.

Functionally, this is one of the proteins that binds to the 5S RNA in the ribosome where it forms part of the central protuberance. This chain is Large ribosomal subunit protein bL25, found in Saccharophagus degradans (strain 2-40 / ATCC 43961 / DSM 17024).